The following is a 151-amino-acid chain: Large ribosomal subunit protein uL13 (151 aa).

This sequence belongs to the universal ribosomal protein uL13 family. In terms of assembly, part of the 50S ribosomal subunit.

Its function is as follows. This protein is one of the early assembly proteins of the 50S ribosomal subunit, although it is not seen to bind rRNA by itself. It is important during the early stages of 50S assembly. This is Large ribosomal subunit protein uL13 from Synechococcus sp. (strain JA-2-3B'a(2-13)) (Cyanobacteria bacterium Yellowstone B-Prime).